A 31-amino-acid chain; its full sequence is Cliotide T14 (31 aa).

A cross-link (cyclopeptide (Asp-Asn)) is located at residues 1–31; that stretch reads DTIPCGESCVWIPCISSILGCSCKDKVCYHN. 3 cysteine pairs are disulfide-bonded: Cys5–Cys21, Cys9–Cys23, and Cys14–Cys28.

Contains 3 disulfide bonds. Post-translationally, this is a cyclic peptide. As to expression, expressed in seed but not in root nodules.

Its function is as follows. Probably participates in a plant defense mechanism. Not active against Gram-negative bacterium E.coli ATCC 700926 or Gram-positive bacterium S.aureus ATCC 12600 up to a concentration of 100 uM under low-salt conditions. The polypeptide is Cliotide T14 (Clitoria ternatea (Butterfly pea)).